The following is a 332-amino-acid chain: Cell growth regulator with RING finger domain protein 1 (332 aa).

The segment at 274 to 309 (CVVCQNGTVNWVLLPCRHTCLCDGCVKYFQQCPMCR) adopts an RING-type zinc-finger fold.

In terms of tissue distribution, ubiquitously expressed with high expression in testis and the cerebellum.

The protein localises to the nucleus. It is found in the endoplasmic reticulum. Able to inhibit growth in several cell lines. The protein is Cell growth regulator with RING finger domain protein 1 (CGRRF1) of Homo sapiens (Human).